The primary structure comprises 214 residues: MTKLFEPAACQVDLRTGAMSAATGAYQKRFRDLAGLYADEAAFSAMRENWNDTVVYEVSEFRPNERSGDLIFGTTRMLPGKVGDEYFVTRGHIHRQSDRPEIYYGQKGSGLMLLESPEGEVRIVAIDARTVCYVPPYWIHRSVNIGGEELVMLFCYPADSGQDYDCIAKAGGMRVRIVDDGEGGWKQVDNSSWRKRDAATIAALYGLEKKEKSA.

Fe cation-binding residues include histidine 92, histidine 94, glutamate 101, and histidine 140.

It belongs to the archaeal-type GPI family. In terms of assembly, homodimer.

It localises to the cytoplasm. The catalysed reaction is alpha-D-glucose 6-phosphate = beta-D-fructose 6-phosphate. It participates in carbohydrate degradation; glycolysis; D-glyceraldehyde 3-phosphate and glycerone phosphate from D-glucose: step 2/4. The chain is Glucose-6-phosphate isomerase from Sinorhizobium medicae (strain WSM419) (Ensifer medicae).